The chain runs to 457 residues: Probable xyloglucan 6-xylosyltransferase 5 (457 aa).

Residues 1–40 (MGQDGSPAHKRPSGSGGGLPTTTLTNGGGRGGRGGLLPRG) are disordered. Topologically, residues 1–51 (MGQDGSPAHKRPSGSGGGLPTTTLTNGGGRGGRGGLLPRGRQMQKTFNNIK) are cytoplasmic. The span at 26–37 (NGGGRGGRGGLL) shows a compositional bias: gly residues. The helical; Signal-anchor for type II membrane protein transmembrane segment at 52 to 72 (ITILCGFVTILVLRGTIGVGN) threads the bilayer. The Lumenal segment spans residues 73 to 457 (LGSSSADAVN…RTPVETKPQN (385 aa)). The segment at 97-116 (RSDSDPTDLDEPQEGDMNPN) is disordered. A compositionally biased stretch (acidic residues) spans 101–110 (DPTDLDEPQE). Residues asparagine 116 and asparagine 432 are each glycosylated (N-linked (GlcNAc...) asparagine).

Belongs to the glycosyltransferase 34 family. In terms of assembly, interacts with XXT2 and CSLC4. Interacts with FUT1 and XLT2. As to expression, highly expressed in roots, stems and cauline leaves, and at lower levels in rosette leaves, flowers and siliques.

Its subcellular location is the golgi apparatus membrane. It catalyses the reaction Transfers an alpha-D-xylosyl residue from UDP-D-xylose to a glucose residue in xyloglucan, forming an alpha-(1-&gt;6)-D-xylosyl-D-glucose linkage.. Probable xyloglucan xylosyltransferase involved in the biosynthesis of xyloglucan in roots. May act in association with XXT1 and XXT2. Associates with other xyloglucan-synthesizing enzymes to form multiprotein complexes for xyloglucan synthesis in the Golgi. This Arabidopsis thaliana (Mouse-ear cress) protein is Probable xyloglucan 6-xylosyltransferase 5.